Consider the following 245-residue polypeptide: uncharacterized protein (245 aa).

This is an uncharacterized protein from Bacillus subtilis (strain 168).